The sequence spans 218 residues: Ribose-5-phosphate isomerase A (218 aa).

Residues 28 to 31 (TGST), 81 to 84 (DGAD), and 94 to 97 (KGGG) contribute to the substrate site. Glutamate 103 acts as the Proton acceptor in catalysis. Lysine 121 provides a ligand contact to substrate.

The protein belongs to the ribose 5-phosphate isomerase family. In terms of assembly, homodimer.

The enzyme catalyses aldehydo-D-ribose 5-phosphate = D-ribulose 5-phosphate. Its pathway is carbohydrate degradation; pentose phosphate pathway; D-ribose 5-phosphate from D-ribulose 5-phosphate (non-oxidative stage): step 1/1. Functionally, catalyzes the reversible conversion of ribose-5-phosphate to ribulose 5-phosphate. The polypeptide is Ribose-5-phosphate isomerase A (Aliivibrio salmonicida (strain LFI1238) (Vibrio salmonicida (strain LFI1238))).